A 250-amino-acid chain; its full sequence is MSDLTSTILFEHPLNEKMRTWLRMEFLLQQLESHRSLDNIANALTFFRSASDLIDVLERGEVRTDLLKELERQQQKLQQWADIPGVDVSLVDSLRNQLKSRAAVLMSAPRIGQSLKEDRLISVVRQRLSIPGGCCSFDLPTLHVWLHQPSEQRDQHINKLLASLAPLHQSLTIILDLIRQSCPLRSQISLNGFFQDNAGGADLLRLRLPLDPQLYPQISGHKTRYAIRFLALDSENGTVPARLSFELACC.

It belongs to the ZapD family. In terms of assembly, interacts with FtsZ.

The protein resides in the cytoplasm. Functionally, cell division factor that enhances FtsZ-ring assembly. Directly interacts with FtsZ and promotes bundling of FtsZ protofilaments, with a reduction in FtsZ GTPase activity. The sequence is that of Cell division protein ZapD from Yersinia pseudotuberculosis serotype O:1b (strain IP 31758).